Reading from the N-terminus, the 324-residue chain is UDP-N-acetylenolpyruvoylglucosamine reductase (324 aa).

The region spanning 36-203 is the FAD-binding PCMH-type domain; sequence FRAGGLAELM…THAIFEGFPE (168 aa). Arg183 is a catalytic residue. The active-site Proton donor is Ser232. Residue Glu302 is part of the active site.

The protein belongs to the MurB family. FAD is required as a cofactor.

It localises to the cytoplasm. It catalyses the reaction UDP-N-acetyl-alpha-D-muramate + NADP(+) = UDP-N-acetyl-3-O-(1-carboxyvinyl)-alpha-D-glucosamine + NADPH + H(+). Its pathway is cell wall biogenesis; peptidoglycan biosynthesis. Its function is as follows. Cell wall formation. This Sinorhizobium fredii (strain NBRC 101917 / NGR234) protein is UDP-N-acetylenolpyruvoylglucosamine reductase.